Here is a 375-residue protein sequence, read N- to C-terminus: V-type proton ATPase subunit C (375 aa).

Belongs to the V-ATPase C subunit family. V-ATPase is a heteromultimeric enzyme composed of a peripheral catalytic V1 complex (components A to H) attached to an integral membrane V0 proton pore complex (components: a, c, c'', d and e). Phosphorylated on Ser/Thr residues by WNK8.

Its subcellular location is the vacuole membrane. In terms of biological role, subunit of the peripheral V1 complex of vacuolar ATPase. Subunit C is necessary for the assembly of the catalytic sector of the enzyme and is likely to have a specific function in its catalytic activity. V-ATPase is responsible for acidifying a variety of intracellular compartments in eukaryotic cells. This chain is V-type proton ATPase subunit C (VHA-C), found in Arabidopsis thaliana (Mouse-ear cress).